The following is a 589-amino-acid chain: Sulfite reductase [NADPH] hemoprotein beta-component (589 aa).

Residues C443, C449, C488, and C492 each coordinate [4Fe-4S] cluster. C492 contacts siroheme.

It belongs to the nitrite and sulfite reductase 4Fe-4S domain family. In terms of assembly, alpha(8)-beta(8). The alpha component is a flavoprotein, the beta component is a hemoprotein. Siroheme serves as cofactor. It depends on [4Fe-4S] cluster as a cofactor.

It catalyses the reaction hydrogen sulfide + 3 NADP(+) + 3 H2O = sulfite + 3 NADPH + 4 H(+). Its pathway is sulfur metabolism; hydrogen sulfide biosynthesis; hydrogen sulfide from sulfite (NADPH route): step 1/1. Functionally, component of the sulfite reductase complex that catalyzes the 6-electron reduction of sulfite to sulfide. This is one of several activities required for the biosynthesis of L-cysteine from sulfate. This chain is Sulfite reductase [NADPH] hemoprotein beta-component, found in Neisseria meningitidis serogroup C (strain 053442).